The chain runs to 312 residues: Olfactory receptor 4F3/4F16/4F29 (312 aa).

Topologically, residues M1–L25 are extracellular. The N-linked (GlcNAc...) asparagine glycan is linked to N5. The helical transmembrane segment at L26–V49 threads the bilayer. The Cytoplasmic segment spans residues T50–S57. Residues P58–P79 form a helical membrane-spanning segment. Over K80–Q100 the chain is Extracellular. C97 and C189 are oxidised to a cystine. Residues I101–F120 traverse the membrane as a helical segment. The Cytoplasmic segment spans residues D121–R139. Residues M140–F158 form a helical membrane-spanning segment. Residues Q159–L195 are Extracellular-facing. The chain crosses the membrane as a helical span at residues Q196 to V219. The Cytoplasmic portion of the chain corresponds to F220–K235. A helical transmembrane segment spans residues A236 to Y258. At T259 to K269 the chain is on the extracellular side. A helical transmembrane segment spans residues F270–F289. At R290 to S312 the chain is on the cytoplasmic side.

The protein belongs to the G-protein coupled receptor 1 family.

Its subcellular location is the cell membrane. Functionally, odorant receptor. The chain is Olfactory receptor 4F3/4F16/4F29 (OR4F3) from Homo sapiens (Human).